The following is a 152-amino-acid chain: UPF0756 membrane protein Helmi_09930 (152 aa).

5 consecutive transmembrane segments (helical) span residues 6-26 (VLLI…TALA), 52-72 (TGLI…KVGL), 75-95 (VLLS…VLAT), 111-131 (IIVG…GIPV), and 132-152 (GPLM…WLSK).

Belongs to the UPF0756 family.

Its subcellular location is the cell membrane. This chain is UPF0756 membrane protein Helmi_09930, found in Heliobacterium modesticaldum (strain ATCC 51547 / Ice1).